The primary structure comprises 495 residues: Cytochrome P450 Tp4149 (495 aa).

Transmembrane regions (helical) follow at residues 4–24 and 208–228; these read ILSL…MFFI and YLSM…SWVD. Asn-419 carries N-linked (GlcNAc...) asparagine glycosylation. Residue Cys-437 coordinates heme.

This sequence belongs to the cytochrome P450 family. The cofactor is heme.

The protein resides in the membrane. It functions in the pathway secondary metabolite biosynthesis; terpenoid biosynthesis. Its function is as follows. Probably involved in the biosynthesis of germacrene-derived sesquiterpene lactones. This chain is Cytochrome P450 Tp4149, found in Tanacetum parthenium (Feverfew).